A 124-amino-acid chain; its full sequence is Fluoride-specific ion channel FluC (124 aa).

4 helical membrane passes run 3–23 (VLLI…VSNL), 34–54 (IGTL…FIFI), 68–88 (LLLI…IETF), and 100–120 (ALNV…GVLI). Na(+) is bound by residues Gly75 and Thr78.

It belongs to the fluoride channel Fluc/FEX (TC 1.A.43) family.

The protein localises to the cell inner membrane. It catalyses the reaction fluoride(in) = fluoride(out). Na(+) is not transported, but it plays an essential structural role and its presence is essential for fluoride channel function. Its function is as follows. Fluoride-specific ion channel. Important for reducing fluoride concentration in the cell, thus reducing its toxicity. This chain is Fluoride-specific ion channel FluC, found in Coxiella burnetii (strain CbuK_Q154) (Coxiella burnetii (strain Q154)).